Reading from the N-terminus, the 483-residue chain is Glycogen synthase (483 aa).

Residue Lys18 coordinates ADP-alpha-D-glucose.

The protein belongs to the glycosyltransferase 1 family. Bacterial/plant glycogen synthase subfamily.

It catalyses the reaction [(1-&gt;4)-alpha-D-glucosyl](n) + ADP-alpha-D-glucose = [(1-&gt;4)-alpha-D-glucosyl](n+1) + ADP + H(+). It participates in glycan biosynthesis; glycogen biosynthesis. In terms of biological role, synthesizes alpha-1,4-glucan chains using ADP-glucose. The polypeptide is Glycogen synthase (Rhodopseudomonas palustris (strain TIE-1)).